We begin with the raw amino-acid sequence, 153 residues long: NADPH-dependent 7-cyano-7-deazaguanine reductase (153 aa).

The interval 1 to 22 (MTDNRYDNLGQLGTSTPLPDNP) is disordered. C51 acts as the Thioimide intermediate in catalysis. Residue D58 is the Proton donor of the active site. Substrate is bound by residues 73 to 75 (VES) and 92 to 93 (HE).

This sequence belongs to the GTP cyclohydrolase I family. QueF type 1 subfamily.

The protein localises to the cytoplasm. It carries out the reaction 7-aminomethyl-7-carbaguanine + 2 NADP(+) = 7-cyano-7-deazaguanine + 2 NADPH + 3 H(+). It functions in the pathway tRNA modification; tRNA-queuosine biosynthesis. In terms of biological role, catalyzes the NADPH-dependent reduction of 7-cyano-7-deazaguanine (preQ0) to 7-aminomethyl-7-deazaguanine (preQ1). The sequence is that of NADPH-dependent 7-cyano-7-deazaguanine reductase from Maricaulis maris (strain MCS10) (Caulobacter maris).